Here is a 476-residue protein sequence, read N- to C-terminus: Glutamate--tRNA ligase (476 aa).

The 'HIGH' region motif lies at 9-19; that stretch reads PSPTGKLHIGT. A compositionally biased stretch (basic and acidic residues) spans 109-129; that stretch reads REEQKSRNKPPRYDNRHRSLS. A disordered region spans residues 109 to 133; that stretch reads REEQKSRNKPPRYDNRHRSLSTEEE. The 'KMSKS' region signature appears at 248–252; the sequence is KLSKR. Position 251 (lysine 251) interacts with ATP.

The protein belongs to the class-I aminoacyl-tRNA synthetase family. Glutamate--tRNA ligase type 1 subfamily. In terms of assembly, monomer.

The protein resides in the cytoplasm. The enzyme catalyses tRNA(Glu) + L-glutamate + ATP = L-glutamyl-tRNA(Glu) + AMP + diphosphate. Functionally, catalyzes the attachment of glutamate to tRNA(Glu) in a two-step reaction: glutamate is first activated by ATP to form Glu-AMP and then transferred to the acceptor end of tRNA(Glu). The polypeptide is Glutamate--tRNA ligase (Prochlorococcus marinus (strain MIT 9211)).